We begin with the raw amino-acid sequence, 129 residues long: ATP synthase epsilon chain (129 aa).

This sequence belongs to the ATPase epsilon chain family. In terms of assembly, F-type ATPases have 2 components, CF(1) - the catalytic core - and CF(0) - the membrane proton channel. CF(1) has five subunits: alpha(3), beta(3), gamma(1), delta(1), epsilon(1). CF(0) has three main subunits: a, b and c.

Its subcellular location is the cell inner membrane. Functionally, produces ATP from ADP in the presence of a proton gradient across the membrane. This chain is ATP synthase epsilon chain, found in Campylobacter jejuni subsp. jejuni serotype O:6 (strain 81116 / NCTC 11828).